A 128-amino-acid polypeptide reads, in one-letter code: Large ribosomal subunit protein eL8 (128 aa).

The protein belongs to the eukaryotic ribosomal protein eL8 family. As to quaternary structure, part of the 50S ribosomal subunit. Probably part of the RNase P complex.

The protein localises to the cytoplasm. In terms of biological role, multifunctional RNA-binding protein that recognizes the K-turn motif in ribosomal RNA, the RNA component of RNase P, box H/ACA, box C/D and box C'/D' sRNAs. This chain is Large ribosomal subunit protein eL8, found in Ignicoccus hospitalis (strain KIN4/I / DSM 18386 / JCM 14125).